The following is a 434-amino-acid chain: Methylenetetrahydrofolate--tRNA-(uracil-5-)-methyltransferase TrmFO (434 aa).

Residue 8–13 (GAGLAG) participates in FAD binding.

Belongs to the MnmG family. TrmFO subfamily. Requires FAD as cofactor.

It localises to the cytoplasm. The enzyme catalyses uridine(54) in tRNA + (6R)-5,10-methylene-5,6,7,8-tetrahydrofolate + NADH + H(+) = 5-methyluridine(54) in tRNA + (6S)-5,6,7,8-tetrahydrofolate + NAD(+). It catalyses the reaction uridine(54) in tRNA + (6R)-5,10-methylene-5,6,7,8-tetrahydrofolate + NADPH + H(+) = 5-methyluridine(54) in tRNA + (6S)-5,6,7,8-tetrahydrofolate + NADP(+). Catalyzes the folate-dependent formation of 5-methyl-uridine at position 54 (M-5-U54) in all tRNAs. The polypeptide is Methylenetetrahydrofolate--tRNA-(uracil-5-)-methyltransferase TrmFO (Exiguobacterium sibiricum (strain DSM 17290 / CCUG 55495 / CIP 109462 / JCM 13490 / 255-15)).